The primary structure comprises 351 residues: Dihydroorotate dehydrogenase (quinone) (351 aa).

FMN is bound by residues 61-65 (AGLDK) and T85. Residue K65 participates in substrate binding. A substrate-binding site is contributed by 110-114 (NRMGF). FMN is bound by residues N139 and N172. A substrate-binding site is contributed by N172. The active-site Nucleophile is S175. N177 provides a ligand contact to substrate. The FMN site is built by K217 and T245. 246–247 (NT) is a binding site for substrate. FMN is bound by residues G268, G297, and 318 to 319 (YS).

This sequence belongs to the dihydroorotate dehydrogenase family. Type 2 subfamily. In terms of assembly, monomer. Requires FMN as cofactor.

The protein resides in the cell membrane. The catalysed reaction is (S)-dihydroorotate + a quinone = orotate + a quinol. The protein operates within pyrimidine metabolism; UMP biosynthesis via de novo pathway; orotate from (S)-dihydroorotate (quinone route): step 1/1. Its function is as follows. Catalyzes the conversion of dihydroorotate to orotate with quinone as electron acceptor. This is Dihydroorotate dehydrogenase (quinone) from Xanthomonas axonopodis pv. citri (strain 306).